We begin with the raw amino-acid sequence, 147 residues long: NADH-ubiquinone oxidoreductase chain 3 (147 aa).

Helical transmembrane passes span 6–26, 60–80, and 84–104; these read LFIL…LVFA, AICF…VGSL, and TFYS…GFVF.

Belongs to the complex I subunit 3 family.

The protein localises to the mitochondrion membrane. It catalyses the reaction a ubiquinone + NADH + 5 H(+)(in) = a ubiquinol + NAD(+) + 4 H(+)(out). Core subunit of the mitochondrial membrane respiratory chain NADH dehydrogenase (Complex I) that is believed to belong to the minimal assembly required for catalysis. Complex I functions in the transfer of electrons from NADH to the respiratory chain. The immediate electron acceptor for the enzyme is believed to be ubiquinone. This Neurospora crassa (strain ATCC 24698 / 74-OR23-1A / CBS 708.71 / DSM 1257 / FGSC 987) protein is NADH-ubiquinone oxidoreductase chain 3 (ndh-3).